We begin with the raw amino-acid sequence, 237 residues long: Ras-related protein Rab-23 (237 aa).

Ala19 contacts GDP. 5 residues coordinate GTP: Val20, Gly21, Lys22, Ser23, and Ser24. Positions 21, 22, 23, 24, and 37 each coordinate GDP. A Mg(2+)-binding site is contributed by Ser23. The Switch 1 motif lies at 28–46; sequence RYCKGIFTKDYKKTIGVDF. Tyr38 contributes to the GTP binding site. Residue Lys40 coordinates GDP. GTP is bound at residue Thr41. Mg(2+)-binding residues include Thr41 and Asp64. The Switch 2 motif lies at 65–84; that stretch reads TAGQEEFDAITKAYYRGAQA. Gly67, Asn121, Lys122, Asp124, Ser151, Val152, and Lys153 together coordinate GTP. GDP-binding residues include Asn121, Lys122, and Asp124. Val152 and Lys153 together coordinate GDP. Phosphoserine occurs at positions 186 and 187. A disordered region spans residues 204–237; the sequence is QNSSSLNGGDVINLRPNKQRTKRTRNPFSSCSVP. Position 234 is a cysteine methyl ester (Cys234). Cys234 is lipidated: S-geranylgeranyl cysteine. The propeptide at 235-237 is removed in mature form; sequence SVP.

The protein belongs to the small GTPase superfamily. Rab family. As to quaternary structure, interacts with SUFU. Requires Mg(2+) as cofactor. As to expression, detected in brain neurons (at protein level). Forebrain and midbrain.

The protein resides in the cell membrane. It localises to the cytoplasm. It is found in the endosome membrane. The protein localises to the cytoplasmic vesicle. Its subcellular location is the autophagosome. The protein resides in the phagosome. It localises to the phagosome membrane. It catalyses the reaction GTP + H2O = GDP + phosphate + H(+). Regulated by guanine nucleotide exchange factors (GEFs) which promote the exchange of bound GDP for free GTP. Regulated by GTPase activating proteins (GAPs) which increase the GTP hydrolysis activity. Inhibited by GDP dissociation inhibitors (GDIs). Functionally, the small GTPases Rab are key regulators of intracellular membrane trafficking, from the formation of transport vesicles to their fusion with membranes. Rabs cycle between an inactive GDP-bound form and an active GTP-bound form that is able to recruit to membranes different set of downstream effectors directly responsible for vesicle formation, movement, tethering and fusion. Plays a role in autophagic vacuole assembly, and mediates defense against pathogens, such as S.aureus, by promoting their capture by autophagosomes that then merge with lysosomes. Together with SUFU, prevents nuclear import of GLI1, and thereby inhibits GLI1 transcription factor activity. Regulates GLI1 in differentiating chondrocytes. Likewise, regulates GLI3 proteolytic processing and modulates GLI2 and GLI3 transcription factor activity. The sequence is that of Ras-related protein Rab-23 from Mus musculus (Mouse).